The sequence spans 590 residues: L-erythrulose kinase (590 aa).

The DhaK domain occupies Q7 to F331. Residue H217 is the Tele-hemiaminal-histidine intermediate of the active site. The 203-residue stretch at H366–A568 folds into the DhaL domain. ADP contacts are provided by residues H398 to G401, T441 to S442, G483, R540, and D553 to G555.

The enzyme catalyses L-erythrulose + ATP = L-erythrulose 1-phosphate + ADP + H(+). The protein operates within carbohydrate metabolism. Its function is as follows. Involved in catabolism of D-apiose. Catalyzes the phosphorylation of L-erythrulose to L-erythrulose 1-phosphate. Can also phosphorylate D-erythrulose and dihydroxyacetone in vitro. The sequence is that of L-erythrulose kinase from Pectobacterium atrosepticum (strain SCRI 1043 / ATCC BAA-672) (Erwinia carotovora subsp. atroseptica).